We begin with the raw amino-acid sequence, 590 residues long: Putative DEAD-box ATP-dependent RNA helicase 51 (590 aa).

The tract at residues 1-81 (MHPIKLCARS…KQGEGKKGSG (81 aa)) is disordered. Positions 40 to 51 (AACNSEGENNAT) are enriched in polar residues. Residues 59–78 (NKKMKEEKSKRKKKQGEGKK) show a composition bias toward basic and acidic residues. Residues 86-114 (KLFSDLPISDLTANAIRDMNYTHLTEIQA) carry the Q motif motif. The region spanning 117-293 (IPPLMLGSDV…KLTFGSKEER (177 aa)) is the Helicase ATP-binding domain. 130–137 (AKTGSGKT) contributes to the ATP binding site. Positions 240-243 (DEAD) match the DEAD box motif. The Helicase C-terminal domain occupies 329-481 (VLYAFLKKAL…ELVPKLQPYL (153 aa)). A disordered region spans residues 549 to 590 (LESSASKHRKKRNVNTGRRHGIGPSNPYGRKGSDDRRQFARF). Residues 554 to 569 (SKHRKKRNVNTGRRHG) are compositionally biased toward basic residues. Residues 579 to 590 (KGSDDRRQFARF) are compositionally biased toward basic and acidic residues.

This sequence belongs to the DEAD box helicase family. DDX18/HAS1 subfamily.

The enzyme catalyses ATP + H2O = ADP + phosphate + H(+). This Oryza sativa subsp. japonica (Rice) protein is Putative DEAD-box ATP-dependent RNA helicase 51.